A 534-amino-acid polypeptide reads, in one-letter code: Glucans biosynthesis protein D (534 aa).

The segment at residues 1-30 (MRMQRRHLLKNAAAALAALGLPALPQWALA) is a signal peptide (tat-type signal).

The protein belongs to the OpgD/OpgG family. Predicted to be exported by the Tat system. The position of the signal peptide cleavage has not been experimentally proven.

The protein resides in the periplasm. The protein operates within glycan metabolism; osmoregulated periplasmic glucan (OPG) biosynthesis. Its function is as follows. Probably involved in the control of the structural glucose backbone of osmoregulated periplasmic glucans (OPGs). This Xanthomonas oryzae pv. oryzae (strain PXO99A) protein is Glucans biosynthesis protein D.